A 185-amino-acid chain; its full sequence is ATP synthase subunit delta (185 aa).

The protein belongs to the ATPase delta chain family. F-type ATPases have 2 components, F(1) - the catalytic core - and F(0) - the membrane proton channel. F(1) has five subunits: alpha(3), beta(3), gamma(1), delta(1), epsilon(1). CF(0) has four main subunits: a(1), b(2) and c(10-14). The alpha and beta chains form an alternating ring which encloses part of the gamma chain. F(1) is attached to F(0) by a central stalk formed by the gamma and epsilon chains, while a peripheral stalk is formed by the delta and b chains.

The protein resides in the cell membrane. Functionally, f(1)F(0) ATP synthase produces ATP from ADP in the presence of a proton or sodium gradient. F-type ATPases consist of two structural domains, F(1) containing the extramembraneous catalytic core and F(0) containing the membrane proton channel, linked together by a central stalk and a peripheral stalk. During catalysis, ATP synthesis in the catalytic domain of F(1) is coupled via a rotary mechanism of the central stalk subunits to proton translocation. This protein is part of the stalk that links CF(0) to CF(1). It either transmits conformational changes from CF(0) to CF(1) or is implicated in proton conduction. The sequence is that of ATP synthase subunit delta from Heliobacterium modesticaldum (strain ATCC 51547 / Ice1).